A 354-amino-acid chain; its full sequence is RH-like protein (354 aa).

A run of 8 helical transmembrane segments spans residues 11-31 (GCLP…FFFF), 45-65 (VATY…LGFL), 77-97 (VAFN…LDGF), 125-145 (ISVG…MVLV), 167-187 (VNIM…AWCL), 209-229 (AMLG…ALLT), 238-258 (VFNT…VSSL), and 287-307 (LISS…ISIG).

Belongs to the ammonium transporter (TC 2.A.49) family. Rh subfamily.

The protein resides in the membrane. Functionally, may be part of an oligomeric complex which is likely to have a transport or channel function in the erythrocyte membrane. This Hylobates pileatus (Pileated gibbon) protein is RH-like protein.